The sequence spans 134 residues: Arsenate reductase (134 aa).

Residues C11, C83, and C90 each act as nucleophile in the active site. Disulfide bonds link C11–C83 and C83–C90.

Belongs to the low molecular weight phosphotyrosine protein phosphatase family. Thioredoxin-coupled ArsC subfamily.

It is found in the cytoplasm. It carries out the reaction arsenate + [thioredoxin]-dithiol + H(+) = arsenite + [thioredoxin]-disulfide + H2O. Functionally, catalyzes the reduction of arsenate [As(V)] to arsenite [As(III)]. This Bacillus cereus (strain G9842) protein is Arsenate reductase.